A 138-amino-acid chain; its full sequence is 1,4-dihydroxy-2-naphthoyl-CoA hydrolase (138 aa).

Asp16 is an active-site residue.

This sequence belongs to the 4-hydroxybenzoyl-CoA thioesterase family. DHNA-CoA hydrolase subfamily.

It catalyses the reaction 1,4-dihydroxy-2-naphthoyl-CoA + H2O = 1,4-dihydroxy-2-naphthoate + CoA + H(+). Its pathway is cofactor biosynthesis; phylloquinone biosynthesis. It participates in quinol/quinone metabolism; 1,4-dihydroxy-2-naphthoate biosynthesis; 1,4-dihydroxy-2-naphthoate from chorismate: step 7/7. Catalyzes the specific hydrolysis of 1,4-dihydroxy-2-naphthoyl-CoA (DHNA-CoA) to 1,4-dihydroxy-2-naphthoate (DHNA), a reaction involved in phylloquinone (vitamin K1) biosynthesis. Is not active on benzoyl-CoA, phenylacetyl-CoA and aliphatic acyl-CoA thioesters. This chain is 1,4-dihydroxy-2-naphthoyl-CoA hydrolase, found in Synechocystis sp. (strain ATCC 27184 / PCC 6803 / Kazusa).